A 197-amino-acid chain; its full sequence is MNLVPMVVEQTGRGERAYDIYSRLLKERIIFVTGPIEDEMASLIVAQLVFLEAEDPEKDISMYINSPGGVVTAGLSIYDTMQYIKPNVATLCLGQAASMGSLLLCAGAPGMRCALPNSRVMIHQPSGGFRGQATDIEIHAREILEIKRRLNEIFVRHTGKSLEEIESSMERDNFMIAEKARDFGIIDKVIEKRIEEK.

Residue Ser98 is the Nucleophile of the active site. The active site involves His123.

The protein belongs to the peptidase S14 family. In terms of assembly, fourteen ClpP subunits assemble into 2 heptameric rings which stack back to back to give a disk-like structure with a central cavity, resembling the structure of eukaryotic proteasomes.

It is found in the cytoplasm. It carries out the reaction Hydrolysis of proteins to small peptides in the presence of ATP and magnesium. alpha-casein is the usual test substrate. In the absence of ATP, only oligopeptides shorter than five residues are hydrolyzed (such as succinyl-Leu-Tyr-|-NHMec, and Leu-Tyr-Leu-|-Tyr-Trp, in which cleavage of the -Tyr-|-Leu- and -Tyr-|-Trp bonds also occurs).. Functionally, cleaves peptides in various proteins in a process that requires ATP hydrolysis. Has a chymotrypsin-like activity. Plays a major role in the degradation of misfolded proteins. This chain is ATP-dependent Clp protease proteolytic subunit, found in Anaplasma phagocytophilum (strain HZ).